Reading from the N-terminus, the 285-residue chain is Acetyl-coenzyme A carboxylase carboxyl transferase subunit beta 2 (285 aa).

Positions 1-20 (MAIRSLFSGNRKKKEDGQEK) are disordered. One can recognise a CoA carboxyltransferase N-terminal domain in the interval 26 to 285 (LMTKCPECRH…MHTKGGVQHV (260 aa)). Zn(2+) is bound by residues C30, C33, C49, and C52. The segment at 30–52 (CPECRHIQLTKELEKNHKVCTKC) adopts a C4-type zinc-finger fold.

It belongs to the AccD/PCCB family. As to quaternary structure, acetyl-CoA carboxylase is a heterohexamer composed of biotin carboxyl carrier protein (AccB), biotin carboxylase (AccC) and two subunits each of ACCase subunit alpha (AccA) and ACCase subunit beta (AccD). Requires Zn(2+) as cofactor.

Its subcellular location is the cytoplasm. The enzyme catalyses N(6)-carboxybiotinyl-L-lysyl-[protein] + acetyl-CoA = N(6)-biotinyl-L-lysyl-[protein] + malonyl-CoA. It participates in lipid metabolism; malonyl-CoA biosynthesis; malonyl-CoA from acetyl-CoA: step 1/1. Component of the acetyl coenzyme A carboxylase (ACC) complex. Biotin carboxylase (BC) catalyzes the carboxylation of biotin on its carrier protein (BCCP) and then the CO(2) group is transferred by the transcarboxylase to acetyl-CoA to form malonyl-CoA. The chain is Acetyl-coenzyme A carboxylase carboxyl transferase subunit beta 2 from Lysinibacillus sphaericus (strain C3-41).